We begin with the raw amino-acid sequence, 375 residues long: Filamin-binding LIM protein 1 (375 aa).

Residues 1-69 (MASKPEKRVA…KTWTPSGKTN (69 aa)) form a filamin-binding region. The tract at residues 40-176 (ARPWEMLPTK…PPPEEPVTLP (137 aa)) is disordered. The span at 60 to 83 (KTWTPSGKTNASLSGVTPQLSNGG) shows a compositional bias: polar residues. 2 stretches are compositionally biased toward pro residues: residues 98 to 107 (LPPPPPPPSA) and 133 to 144 (LPPPPPPPPPQA). LIM zinc-binding domains lie at 183–244 (DVCG…TLEK), 245–302 (CGKC…RKFA), and 303–372 (PVCS…RSAA). Residues 278-375 (ISDESFALDS…HLKRSAAGCC (98 aa)) form an FERMT2-binding region.

Interacts with FERMT2, FLNA, FLNB and FLNC. Interacts with NKX2-5.

It is found in the cell junction. It localises to the focal adhesion. Its subcellular location is the cytoplasm. The protein localises to the cytoskeleton. The protein resides in the stress fiber. Functionally, serves as an anchoring site for cell-ECM adhesion proteins and filamin-containing actin filaments. Is implicated in cell shape modulation (spreading) and motility. May participate in the regulation of filamin-mediated cross-linking and stabilization of actin filaments. May also regulate the assembly of filamin-containing signaling complexes that control actin assembly. Promotes dissociation of FLNA from ITGB3 and ITGB7. Promotes activation of integrins and regulates integrin-mediated cell-cell adhesion. This is Filamin-binding LIM protein 1 (Fblim1) from Mus musculus (Mouse).